The chain runs to 133 residues: DNA-directed RNA polymerases I and III subunit RPAC2 (133 aa).

Met-1 is subject to N-acetylmethionine.

It belongs to the archaeal Rpo11/eukaryotic RPB11/RPC19 RNA polymerase subunit family. In terms of assembly, component of the RNA polymerase I and RNA polymerase III complexes consisting of at least 13 and 17 subunits, respectively. Pol I complex consists of a ten-subunit catalytic core composed of POLR1A/RPA1, POLR1B/RPA2, POLR1C/RPAC1, POLR1D/RPAC2, POLR1H/RPA12, POLR2E/RPABC1, POLR2F/RPABC2, POLR2H/RPABC3, POLR2K/RPABC4 and POLR2L/RPABC5; a mobile stalk subunit POLR1F/RPA43 protruding from the core and additional subunits homologous to general transcription factors POLR1E/RPA49 and POLR1G/RPA34. Part of Pol I pre-initiation complex (PIC), in which Pol I core assembles with RRN3 and promoter-bound UTBF and SL1/TIF-IB complex. Pol III complex consists of a ten-subunit catalytic core composed of POLR3A/RPC1, POLR3B/RPC2, POLR1C/RPAC1, POLR1D/RPAC2, POLR3K/RPC10, POLR2E/RPABC1, POLR2F/RPABC2, POLR2H/RPABC3, POLR2K/RPABC4 and POLR2L/RPABC5; a mobile stalk composed of two subunits POLR3H/RPC8 and CRCP/RPC9, protruding from the core and functioning primarily in transcription initiation; and additional subunits homologous to general transcription factors of the RNA polymerase II machinery, POLR3C/RPC3-POLR3F/RPC6-POLR3G/RPC7 heterotrimer required for transcription initiation and POLR3D/RPC4-POLR3E/RPC5 heterodimer involved in both transcription initiation and termination.

It is found in the nucleus. Its subcellular location is the nucleolus. Its function is as follows. DNA-dependent RNA polymerase catalyzes the transcription of DNA into RNA using the four ribonucleoside triphosphates as substrates. Common component of RNA polymerases I and III which synthesize ribosomal RNA precursors and short non-coding RNAs including 5S rRNA, snRNAs, tRNAs and miRNAs, respectively. This Homo sapiens (Human) protein is DNA-directed RNA polymerases I and III subunit RPAC2.